The chain runs to 643 residues: Replication protein E1 (643 aa).

The Nuclear localization signal signature appears at 81–83 (KRK). A phosphoserine; by host mark is found at serine 87, serine 91, and serine 105. The Nuclear export signal motif lies at 104-113 (ISPRLDAITL). Residues 130–166 (LTDSGYGNTEVEAETQVERNGEPEDCGGGGQGRDTEG) are disordered. The segment at 181–347 (QQHTGTTRVL…QTIVEHGLAD (167 aa)) is DNA-binding region. The SF3 helicase domain maps to 446–596 (IEFIPFLTKL…FPFDRNGNAL (151 aa)). Position 472–479 (472–479 (GPPDTGKS)) interacts with ATP. A Glycyl lysine isopeptide (Lys-Gly) (interchain with G-Cter in SUMO) cross-link involves residue lysine 553.

The protein belongs to the papillomaviridae E1 protein family. Can form hexamers. Interacts with E2 protein; this interaction increases E1 DNA binding specificity. Interacts with host DNA polymerase subunit POLA2. Interacts with host single stranded DNA-binding protein RPA1. Interacts with host TOP1; this interaction stimulates the enzymatic activity of TOP1. In terms of processing, phosphorylated. Post-translationally, sumoylated.

It is found in the host nucleus. The enzyme catalyses Couples ATP hydrolysis with the unwinding of duplex DNA by translocating in the 3'-5' direction.. It carries out the reaction ATP + H2O = ADP + phosphate + H(+). ATP-dependent DNA 3'-5' helicase required for initiation of viral DNA replication. It forms a complex with the viral E2 protein. The E1-E2 complex binds to the replication origin which contains binding sites for both proteins. During the initial step, a dimer of E1 interacts with a dimer of protein E2 leading to a complex that binds the viral origin of replication with high specificity. Then, a second dimer of E1 displaces the E2 dimer in an ATP-dependent manner to form the E1 tetramer. Following this, two E1 monomers are added to each half of the site, which results in the formation of two E1 trimers on the viral ori. Subsequently, two hexamers will be created. The double hexamer acts as a bi-directional helicase machinery and unwinds the viral DNA and then recruits the host DNA polymerase to start replication. The sequence is that of Replication protein E1 from Homo sapiens (Human).